The primary structure comprises 174 residues: NAD(P)H-quinone oxidoreductase subunit J, chloroplastic (174 aa).

It belongs to the complex I 30 kDa subunit family. NDH is composed of at least 16 different subunits, 5 of which are encoded in the nucleus.

Its subcellular location is the plastid. It localises to the chloroplast thylakoid membrane. The catalysed reaction is a plastoquinone + NADH + (n+1) H(+)(in) = a plastoquinol + NAD(+) + n H(+)(out). The enzyme catalyses a plastoquinone + NADPH + (n+1) H(+)(in) = a plastoquinol + NADP(+) + n H(+)(out). In terms of biological role, NDH shuttles electrons from NAD(P)H:plastoquinone, via FMN and iron-sulfur (Fe-S) centers, to quinones in the photosynthetic chain and possibly in a chloroplast respiratory chain. The immediate electron acceptor for the enzyme in this species is believed to be plastoquinone. Couples the redox reaction to proton translocation, and thus conserves the redox energy in a proton gradient. The protein is NAD(P)H-quinone oxidoreductase subunit J, chloroplastic of Mesostigma viride (Green alga).